Here is a 205-residue protein sequence, read N- to C-terminus: Small ribosomal subunit protein uS4 (205 aa).

The tract at residues 20 to 44 is disordered; it reads WGRPKSPVNRREYGPGQHGQRRKGK. In terms of domain architecture, S4 RNA-binding spans 94 to 154; sequence SRLDAIVYRS…ERSKQLLLVL (61 aa).

The protein belongs to the universal ribosomal protein uS4 family. As to quaternary structure, part of the 30S ribosomal subunit. Contacts protein S5. The interaction surface between S4 and S5 is involved in control of translational fidelity.

Functionally, one of the primary rRNA binding proteins, it binds directly to 16S rRNA where it nucleates assembly of the body of the 30S subunit. With S5 and S12 plays an important role in translational accuracy. The chain is Small ribosomal subunit protein uS4 from Bartonella bacilliformis (strain ATCC 35685 / KC583 / Herrer 020/F12,63).